The following is a 157-amino-acid chain: Transcription antitermination protein NusB (157 aa).

It belongs to the NusB family.

Functionally, involved in transcription antitermination. Required for transcription of ribosomal RNA (rRNA) genes. Binds specifically to the boxA antiterminator sequence of the ribosomal RNA (rrn) operons. The sequence is that of Transcription antitermination protein NusB from Xylella fastidiosa (strain Temecula1 / ATCC 700964).